The following is a 139-amino-acid chain: Putative nickel-responsive regulator (139 aa).

Ni(2+)-binding residues include His-79, His-90, His-92, and Cys-98.

It belongs to the transcriptional regulatory CopG/NikR family. The cofactor is Ni(2+).

Functionally, transcriptional regulator. This Lawsonia intracellularis (strain PHE/MN1-00) protein is Putative nickel-responsive regulator.